A 365-amino-acid chain; its full sequence is Succinyl-diaminopimelate desuccinylase (365 aa).

H65 contributes to the Zn(2+) binding site. D67 is an active-site residue. D96 serves as a coordination point for Zn(2+). Residue E126 is the Proton acceptor of the active site. Residues E127, E155, and H340 each coordinate Zn(2+).

Belongs to the peptidase M20A family. DapE subfamily. Homodimer. Zn(2+) serves as cofactor. It depends on Co(2+) as a cofactor.

It catalyses the reaction N-succinyl-(2S,6S)-2,6-diaminopimelate + H2O = (2S,6S)-2,6-diaminopimelate + succinate. It participates in amino-acid biosynthesis; L-lysine biosynthesis via DAP pathway; LL-2,6-diaminopimelate from (S)-tetrahydrodipicolinate (succinylase route): step 3/3. Its function is as follows. Catalyzes the hydrolysis of N-succinyl-L,L-diaminopimelic acid (SDAP), forming succinate and LL-2,6-diaminopimelate (DAP), an intermediate involved in the bacterial biosynthesis of lysine and meso-diaminopimelic acid, an essential component of bacterial cell walls. The chain is Succinyl-diaminopimelate desuccinylase from Campylobacter jejuni subsp. jejuni serotype O:23/36 (strain 81-176).